Consider the following 407-residue polypeptide: Peptidase T (407 aa).

Histidine 82 lines the Zn(2+) pocket. Aspartate 84 is an active-site residue. Aspartate 143 contributes to the Zn(2+) binding site. Glutamate 177 functions as the Proton acceptor in the catalytic mechanism. Zn(2+) contacts are provided by glutamate 178, aspartate 200, and histidine 382.

Belongs to the peptidase M20B family. The cofactor is Zn(2+).

Its subcellular location is the cytoplasm. The catalysed reaction is Release of the N-terminal residue from a tripeptide.. Its function is as follows. Cleaves the N-terminal amino acid of tripeptides. The sequence is that of Peptidase T from Streptococcus pyogenes serotype M28 (strain MGAS6180).